The sequence spans 302 residues: Glycine--tRNA ligase alpha subunit (302 aa).

It belongs to the class-II aminoacyl-tRNA synthetase family. As to quaternary structure, tetramer of two alpha and two beta subunits.

Its subcellular location is the cytoplasm. The catalysed reaction is tRNA(Gly) + glycine + ATP = glycyl-tRNA(Gly) + AMP + diphosphate. The polypeptide is Glycine--tRNA ligase alpha subunit (Xanthomonas oryzae pv. oryzae (strain MAFF 311018)).